The sequence spans 585 residues: SCF E3 ubiquitin ligase complex F-box protein grrA (585 aa).

Residues M1–F10 are compositionally biased toward polar residues. 2 disordered regions span residues M1–F34 and D41–P60. Over residues S11 to E25 the composition is skewed to low complexity. One can recognise an F-box domain in the interval P65 to N113. LRR repeat units lie at residues T147 to N171, C172 to E197, L198 to G223, C224 to G249, V250 to E275, C276 to H301, C302 to A329, C330 to K355, C356 to H381, C382 to C407, C408 to K432, C433 to Y465, and C466 to G491.

As to quaternary structure, part of a SCF E3 ubiquitin ligase complex. As to expression, specifically expressed in ascus mother cells.

The protein localises to the cytoplasm. Involved in meiosis and required for ascospore formation. Involved in substrate recognition in ubiquitin-dependent degradation. The polypeptide is SCF E3 ubiquitin ligase complex F-box protein grrA (grrA) (Emericella nidulans (strain FGSC A4 / ATCC 38163 / CBS 112.46 / NRRL 194 / M139) (Aspergillus nidulans)).